Reading from the N-terminus, the 1029-residue chain is Sodium/potassium-transporting ATPase subunit alpha-4 (1029 aa).

The interval 1–37 (MGLWGKKGTVAPHDQSPRRRPKKGLIKKKMVKREKQK) is disordered. The Cytoplasmic portion of the chain corresponds to 1-95 (MGLWGKKGTV…NTVTPPPTTP (95 aa)). Positions 18 to 36 (RRRPKKGLIKKKMVKREKQ) are enriched in basic residues. An interaction with phosphoinositide-3 kinase region spans residues 90 to 92 (PPP). The chain crosses the membrane as a helical span at residues 96–116 (EWVKFCKQLFGGFSLLLWTGA). At 117–139 (ILCFVAYSIQIYFNEEPTKDNLY) the chain is on the extracellular side. Residues 140-160 (LSIVLSVVVIVTGCFSYYQEA) traverse the membrane as a helical segment. The Cytoplasmic segment spans residues 161–296 (KSSKIMESFK…VGQTPIAAEI (136 aa)). Residues 223–237 (NSSLTGESEPQSRSP) are compositionally biased toward polar residues. Residues 223-242 (NSSLTGESEPQSRSPDFTHE) are disordered. The chain crosses the membrane as a helical span at residues 297–316 (EHFIHLITVVAVFLGVTFFA). Residues 317–328 (LSLLLGYGWLEA) are Extracellular-facing. Residues 329–346 (IIFLIGIIVANVPEGLLA) form a helical membrane-spanning segment. The Cytoplasmic segment spans residues 347–778 (TVTVCLTLTA…EEGRLIFDNL (432 aa)). Asp384 functions as the 4-aspartylphosphate intermediate in the catalytic mechanism. Mg(2+)-binding residues include Asp723 and Asp727. Residues 779–798 (KKSIMYTLTSNIPEITPFLM) traverse the membrane as a helical segment. Over 799 to 808 (FIILGIPLPL) the chain is Extracellular. The chain crosses the membrane as a helical span at residues 809–829 (GTITILCIDLGTDMVPAISLA). Residues 830–849 (YESAESDIMKRLPRNPKTDN) lie on the Cytoplasmic side of the membrane. A helical membrane pass occupies residues 850-872 (LVNHRLIGMAYGQIGMIQALAGF). Residues 873–924 (FTYFVILAENGFRPVDLLGIRLHWEDKYLNDLEDSYGQQWTYEQRKVVEFTC) are Extracellular-facing. Residues 925 to 944 (QTAFFVTIVVVQWADLIISK) traverse the membrane as a helical segment. The Cytoplasmic portion of the chain corresponds to 945 to 957 (TRRNSLFQQGMRN). Ser949 bears the Phosphoserine; by PKA mark. The chain crosses the membrane as a helical span at residues 958 to 976 (KVLIFGILEETLLAAFLSY). Topologically, residues 977 to 991 (TPGMDVALRMYPLKI) are extracellular. The helical transmembrane segment at 992 to 1012 (TWWLCAIPYSILIFVYDEIRK) threads the bilayer. The Cytoplasmic segment spans residues 1013 to 1029 (LLIRQHPDGWVERETYY).

Belongs to the cation transport ATPase (P-type) (TC 3.A.3) family. Type IIC subfamily. The sodium/potassium-transporting ATPase is composed of a catalytic alpha subunit, an auxiliary non-catalytic beta subunit and an additional regulatory subunit. As to expression, specifically expressed in testis. Found in very low levels in skeletal muscle. Expressed in mature sperm (at protein level).

The protein localises to the cell membrane. The catalysed reaction is K(+)(out) + Na(+)(in) + ATP + H2O = K(+)(in) + Na(+)(out) + ADP + phosphate + H(+). With respect to regulation, specifically inhibited by an endogenous cardiac glycoside, ouabain. Functionally, this is the catalytic component of the active enzyme, which catalyzes the hydrolysis of ATP coupled with the exchange of sodium and potassium ions across the plasma membrane. This action creates the electrochemical gradient of sodium and potassium ions, providing the energy for active transport of various nutrients. Plays a role in sperm motility. The chain is Sodium/potassium-transporting ATPase subunit alpha-4 from Homo sapiens (Human).